The chain runs to 659 residues: Pollen receptor-like kinase 6 (659 aa).

The first 26 residues, 1 to 26, serve as a signal peptide directing secretion; sequence MAAAVLNPGFFLLILLLSFSISPSLQ. The Extracellular segment spans residues 27 to 266; the sequence is YVSESEPLVR…SVPETSNKAA (240 aa). A disulfide bond links cysteine 58 and cysteine 67. LRR repeat units follow at residues 95-118, 120-142, 143-167, 168-190, and 192-214; these read LPNL…FFKL, GLKS…FFKD, MSKL…ITQL, PQLE…EFGS, and KNLK…SIAD. Residue asparagine 128 is glycosylated (N-linked (GlcNAc...) asparagine). Asparagine 179 carries N-linked (GlcNAc...) asparagine glycosylation. N-linked (GlcNAc...) asparagine glycosylation occurs at asparagine 221. The LURE peptides binding stretch occupies residues 226 to 242; sequence EYLCGPVVDVGCENIEL. A disulfide bridge connects residues cysteine 229 and cysteine 237. A disordered region spans residues 241–260; that stretch reads ELNDPQEGQPPSKPSSSVPE. A helical transmembrane segment spans residues 267–287; sequence INAIMVSISLLLLFFIIVGVI. The Cytoplasmic portion of the chain corresponds to 288–659; that stretch reads KRRNKKKNPD…AVRRIEQVKT (372 aa). Residues 312–354 are disordered; that stretch reads VRISESSSTTAKRSTDSSRKRGGHSDDGSTKKGVSNIGKGGNG. Over residues 324–341 the composition is skewed to basic and acidic residues; it reads RSTDSSRKRGGHSDDGST. The region spanning 384–659 is the Protein kinase domain; that stretch reads KAAAEVLGNG…AVRRIEQVKT (276 aa). Residues 390–398 and lysine 412 contribute to the ATP site; that span reads LGNGSLGSA. Residue serine 464 is modified to Phosphoserine. A phosphothreonine mark is found at threonine 484 and threonine 557. Serine 561 is modified (phosphoserine).

Belongs to the protein kinase superfamily. Ser/Thr protein kinase family. Interacts with ROPGEF8, ROPGEF9, ROPGEF12, ROPGEF13, PRK3, LIP1 and LIP2. Binds to LURE peptides via its LRR repeats; interacts with LURE1.1, LURE1.2, LURE1.3 and LURE1.4. Expressed specifically in the pollen tube, predominantly at the tip.

Its subcellular location is the cell membrane. It localises to the cytoplasmic granule. Key receptor for sensing species-specific attractants in cooperation with other pollen receptor-like kinases. Essential for pollen tube reorientation toward attractant peptides. This is Pollen receptor-like kinase 6 from Arabidopsis thaliana (Mouse-ear cress).